The primary structure comprises 401 residues: Lipid-A-disaccharide synthase (401 aa).

Belongs to the LpxB family.

The enzyme catalyses a lipid X + a UDP-2-N,3-O-bis[(3R)-3-hydroxyacyl]-alpha-D-glucosamine = a lipid A disaccharide + UDP + H(+). It participates in bacterial outer membrane biogenesis; LPS lipid A biosynthesis. In terms of biological role, condensation of UDP-2,3-diacylglucosamine and 2,3-diacylglucosamine-1-phosphate to form lipid A disaccharide, a precursor of lipid A, a phosphorylated glycolipid that anchors the lipopolysaccharide to the outer membrane of the cell. In Rhodospirillum centenum (strain ATCC 51521 / SW), this protein is Lipid-A-disaccharide synthase.